Consider the following 290-residue polypeptide: uncharacterized protein (290 aa).

Residues 1-61 form the HTH lysR-type domain; sequence MVMNMNHLHI…RDKHHGLMLT (61 aa). The H-T-H motif DNA-binding region spans 20–39; the sequence is ITEAAKELFISQPAVSKAIK.

This sequence belongs to the LysR transcriptional regulatory family.

This is an uncharacterized protein from Bacillus subtilis (strain 168).